Here is a 678-residue protein sequence, read N- to C-terminus: RxLR effector protein PITG_16705 (678 aa).

The signal sequence occupies residues 1-20; the sequence is MHLFFLTAVAFVITSVSVDA. Residues 46-61 carry the RxLR-dEER motif; that stretch reads RLLRKNSTVDLVGEER.

This sequence belongs to the RxLR effector family.

It is found in the secreted. Its subcellular location is the host cytoplasm. Functionally, effector that enhances P.infestans colonization of Nicotiana benthamiana leaves. The polypeptide is RxLR effector protein PITG_16705 (Phytophthora infestans (strain T30-4) (Potato late blight agent)).